The following is a 126-amino-acid chain: Calcitonin receptor-stimulating peptide 1 (126 aa).

Positions M1–T25 are cleaved as a signal peptide. The propeptide occupies A26–Q78. A disulfide bond links C82 and C87. G118 carries the glycine amide modification. Positions N123–I126 are excised as a propeptide.

In terms of tissue distribution, mainly expressed in the thyroid gland and CNS. Found in the nerve cells of cerebrum, hippocampus, hypothalamus, pons/midbrain and thalamus.

It localises to the secreted. In terms of biological role, stimulates cAMP production in porcine kidney cell line LLC-PK1 via the calcitonin receptor (CT) but not via the CT-like (CL) receptor. This is Calcitonin receptor-stimulating peptide 1 (CRSP1) from Sus scrofa (Pig).